The sequence spans 130 residues: Small ribosomal subunit protein uS8 (130 aa).

It belongs to the universal ribosomal protein uS8 family. Part of the 30S ribosomal subunit. Contacts proteins S5 and S12.

Functionally, one of the primary rRNA binding proteins, it binds directly to 16S rRNA central domain where it helps coordinate assembly of the platform of the 30S subunit. This chain is Small ribosomal subunit protein uS8, found in Vibrio cholerae serotype O1 (strain ATCC 39541 / Classical Ogawa 395 / O395).